The chain runs to 175 residues: S-fimbrial protein subunit SfaG (175 aa).

Positions 1-27 are cleaved as a signal peptide; sequence MVKDIIKTVTFSCMLAGSMFVTCHVCA. A disulfide bond links cysteine 43 and cysteine 83.

This sequence belongs to the fimbrial protein family.

It localises to the fimbrium. Fimbriae (also called pili), polar filaments radiating from the surface of the bacterium to a length of 0.5-1.5 micrometers and numbering 100-300 per cell, enable bacteria to colonize the epithelium of specific host organs. Functionally, a minor fimbrial subunit. This protein is necessary for full expression of S-specific binding. S-fimbrial adhesins enable pathogenic E.coli causing urinary-tract infections or newborn meningitis to attach to glycoproteins terminating with alpha-sialic acid-(2-3)-beta-Gal. The polypeptide is S-fimbrial protein subunit SfaG (sfaG) (Escherichia coli O6:K15:H31 (strain 536 / UPEC)).